A 146-amino-acid polypeptide reads, in one-letter code: Large ribosomal subunit protein bL9 (146 aa).

Belongs to the bacterial ribosomal protein bL9 family.

Binds to the 23S rRNA. This Deinococcus deserti (strain DSM 17065 / CIP 109153 / LMG 22923 / VCD115) protein is Large ribosomal subunit protein bL9.